An 85-amino-acid chain; its full sequence is UPF0297 protein Clos_1665 (85 aa).

The protein belongs to the UPF0297 family.

The sequence is that of UPF0297 protein Clos_1665 from Alkaliphilus oremlandii (strain OhILAs) (Clostridium oremlandii (strain OhILAs)).